Here is a 225-residue protein sequence, read N- to C-terminus: MOB-like protein phocein (225 aa).

Zn(2+)-binding residues include cysteine 92, cysteine 97, cysteine 110, histidine 113, cysteine 119, histidine 127, histidine 169, and histidine 174.

The protein belongs to the MOB1/phocein family. In terms of assembly, binds STRN4. Interacts with DNM1 and EPS15. Interacts with nucleoside diphosphate kinase. Interacts with CTTNBP2. Interacts with CTTNBP2NL. Part of the core of STRIPAK complexes composed of PP2A catalytic and scaffolding subunits, the striatins (PP2A regulatory subunits), the striatin-associated proteins MOB4, STRIP1 and STRIP2, PDCD10 and members of the STE20 kinases, such as STK24 and STK26. Post-translationally, phosphorylated on serine residues. As to expression, highly expressed in adrenal gland, spinal cord, brain and cerebellum. Detected at lower levels in heart and skeletal muscle, and at very low levels in spleen, liver and intestine.

The protein resides in the cytoplasm. It localises to the membrane. The protein localises to the golgi apparatus. It is found in the golgi stack membrane. Functionally, part of the striatin-interacting phosphatase and kinase (STRIPAK) complexes. STRIPAK complexes have critical roles in protein (de)phosphorylation and are regulators of multiple signaling pathways including Hippo, MAPK, nuclear receptor and cytoskeleton remodeling. Different types of STRIPAK complexes are involved in a variety of biological processes such as cell growth, differentiation, apoptosis, metabolism and immune regulation. This chain is MOB-like protein phocein (Mob4), found in Rattus norvegicus (Rat).